We begin with the raw amino-acid sequence, 197 residues long: MAPVPGSGLAKGLAVTLRTMTRKTVTEQYPDAQPELPPRTRGVIGLFEENCTVCMLCARECPDWCIYIDSHKETVPAATPGGRDRSRNVLDRFAIDFALCMYCGICIEVCPFDALFWSPEFEYAETDIRDLTHERDKLREWMWTVPAPPALDPGAEEPKELAAARKAADKLAAQQQPDQPGPDHPGQPDESGQEGRT.

4Fe-4S ferredoxin-type domains follow at residues 42–71 (GVIG…IDSH) and 91–120 (DRFA…WSPE). The [4Fe-4S] cluster site is built by C51, C54, C57, C61, C100, C103, C106, and C110. The disordered stretch occupies residues 147 to 197 (APPALDPGAEEPKELAAARKAADKLAAQQQPDQPGPDHPGQPDESGQEGRT). Residues 156–169 (EEPKELAAARKAAD) are compositionally biased toward basic and acidic residues.

This sequence belongs to the complex I 23 kDa subunit family. As to quaternary structure, NDH-1 is composed of 14 different subunits. Subunits NuoA, H, J, K, L, M, N constitute the membrane sector of the complex. [4Fe-4S] cluster is required as a cofactor.

The protein resides in the cell membrane. The enzyme catalyses a quinone + NADH + 5 H(+)(in) = a quinol + NAD(+) + 4 H(+)(out). In terms of biological role, NDH-1 shuttles electrons from NADH, via FMN and iron-sulfur (Fe-S) centers, to quinones in the respiratory chain. The immediate electron acceptor for the enzyme in this species is believed to be ubiquinone. Couples the redox reaction to proton translocation (for every two electrons transferred, four hydrogen ions are translocated across the cytoplasmic membrane), and thus conserves the redox energy in a proton gradient. In Streptomyces coelicolor (strain ATCC BAA-471 / A3(2) / M145), this protein is NADH-quinone oxidoreductase subunit I 2.